A 160-amino-acid polypeptide reads, in one-letter code: Endoribonuclease YbeY (160 aa).

Zn(2+)-binding residues include His-125, His-129, and His-135.

This sequence belongs to the endoribonuclease YbeY family. Requires Zn(2+) as cofactor.

Its subcellular location is the cytoplasm. Its function is as follows. Single strand-specific metallo-endoribonuclease involved in late-stage 70S ribosome quality control and in maturation of the 3' terminus of the 16S rRNA. This is Endoribonuclease YbeY from Dehalococcoides mccartyi (strain ATCC BAA-2100 / JCM 16839 / KCTC 5957 / BAV1).